Consider the following 319-residue polypeptide: sn-1-specific diacylglycerol lipase ABHD11 (319 aa).

Residues Met-1 to Tyr-28 constitute a mitochondrion transit peptide. The 236-residue stretch at Pro-69–Lys-304 folds into the AB hydrolase-1 domain. Residues Ser-143, Glu-239, and His-298 each act as charge relay system in the active site.

It belongs to the AB hydrolase superfamily. Phosphorylated.

Its subcellular location is the mitochondrion. The protein resides in the mitochondrion matrix. It catalyses the reaction 1-octadecanoyl-2-(5Z,8Z,11Z,14Z-eicosatetraenoyl)-sn-glycerol + H2O = 2-(5Z,8Z,11Z,14Z-eicosatetraenoyl)-glycerol + octadecanoate + H(+). It carries out the reaction a 1,2-diacyl-sn-glycerol + H2O = a 2-acylglycerol + a fatty acid + H(+). The enzyme catalyses a 1,3-diacyl-sn-glycerol + H2O = a 1-acyl-sn-glycerol + a fatty acid + H(+). The catalysed reaction is 1-octadecanoyl-2-(9Z-octadecenoyl)-sn-glycerol + H2O = 2-(9Z-octadecenoyl)-glycerol + octadecanoate + H(+). It catalyses the reaction 1-octadecanoyl-2-(4Z,7Z,10Z,13Z,16Z,19Z-docosahexaenoyl)-sn-glycerol + H2O = 2-(4Z,7Z,10Z,13Z,16Z,19Z-docosahexaenoyl)-glycerol + octadecanoate + H(+). It carries out the reaction 1,2-didecanoylglycerol + H2O = decanoylglycerol + decanoate + H(+). Functionally, catalyzes the hydrolysis of diacylglycerol in vitro and may function as a key regulator in lipid metabolism, namely by regulating the intracellular levels of diacylglycerol. 1,2-diacyl-sn-glycerols are the preferred substrate over 1,3-diacyl-sn-glycerols. The enzyme hydrolyzes stearate in preference to palmitate from the sn-1 position of 1,2-diacyl-sn-glycerols. This chain is sn-1-specific diacylglycerol lipase ABHD11, found in Xenopus tropicalis (Western clawed frog).